The sequence spans 85 residues: Small ribosomal subunit protein uS17 (85 aa).

Belongs to the universal ribosomal protein uS17 family. Part of the 30S ribosomal subunit.

One of the primary rRNA binding proteins, it binds specifically to the 5'-end of 16S ribosomal RNA. The chain is Small ribosomal subunit protein uS17 from Pseudoalteromonas translucida (strain TAC 125).